The sequence spans 278 residues: Elongation factor Ts (278 aa).

Positions 80–83 (TDFV) are involved in Mg(2+) ion dislocation from EF-Tu.

It belongs to the EF-Ts family.

It is found in the cytoplasm. Its function is as follows. Associates with the EF-Tu.GDP complex and induces the exchange of GDP to GTP. It remains bound to the aminoacyl-tRNA.EF-Tu.GTP complex up to the GTP hydrolysis stage on the ribosome. The sequence is that of Elongation factor Ts from Micrococcus luteus (strain ATCC 4698 / DSM 20030 / JCM 1464 / CCM 169 / CCUG 5858 / IAM 1056 / NBRC 3333 / NCIMB 9278 / NCTC 2665 / VKM Ac-2230) (Micrococcus lysodeikticus).